A 77-amino-acid polypeptide reads, in one-letter code: uncharacterized protein (77 aa).

The HTH cro/C1-type domain occupies 11–65; the sequence is FARLRREKGLTQEEVEARSGFSQQYLSSLERGRRNPTVITLYELAQALGVSHVEL. A DNA-binding region (H-T-H motif) is located at residues 22–41; that stretch reads QEEVEARSGFSQQYLSSLER.

This is an uncharacterized protein from Sinorhizobium fredii (strain NBRC 101917 / NGR234).